A 325-amino-acid polypeptide reads, in one-letter code: Cyclic AMP-responsive element-binding protein 1 (325 aa).

Polar residues-rich tracts occupy residues 1-11 (MESGAENQQSG) and 18-27 (AESQQMTVQA). Disordered stretches follow at residues 1–27 (MESGAENQQSGDAAVTEAESQQMTVQA) and 92–111 (SEDSQESVDSVTDSQKRREI). The KID domain maps to 85–144 (QISTIAESEDSQESVDSVTDSQKRREILSRRPSYRKILNDLSSDAPGVPRIEEEKSEEET). Residue S117 is modified to Phosphoserine; by CaMK1, CaMK2, CaMK4, PKB/AKT1 or PKB/AKT2, RPS6KA3, RPS6KA4, RPS6KA5 and SGK1. K120 is covalently cross-linked (Glycyl lysine isopeptide (Lys-Gly) (interchain with G-Cter in SUMO2)). Residues 124–146 (DLSSDAPGVPRIEEEKSEEETSA) are disordered. The residue at position 126 (S126) is a Phosphoserine; by CaMK2. S255 carries the phosphoserine; by HIPK2 modification. Residues 267–325 (ARKREVRLMKNREAARECRRKKKEYVKCLENRVAVLENQNKTLIEELKALKDLYCHKSD) form the bZIP domain. A basic motif region spans residues 268–293 (RKREVRLMKNREAARECRRKKKEYVK). Glycyl lysine isopeptide (Lys-Gly) (interchain with G-Cter in SUMO1) cross-links involve residues K269 and K288. Positions 295-316 (LENRVAVLENQNKTLIEELKAL) are leucine-zipper.

Belongs to the bZIP family. In terms of assembly, interacts with PPRC1. Binds DNA as a dimer. This dimer is stabilized by magnesium ions. Interacts, through the bZIP domain, with the coactivators CRTC1/TORC1, CRTC2/TORC2 and CRTC3/TORC3. When phosphorylated on Ser-117, binds CREBBP. Interacts with CREBL2; regulates CREB1 phosphorylation, stability and transcriptional activity. Interacts (phosphorylated form) with TOX3. Interacts with ARRB1. Binds to HIPK2. Interacts with SGK1. Interacts with TSSK4; this interaction facilitates phosphorylation on Ser-117. Forms a complex with KMT2A and CREBBP. Interacts with TOX4; CREB1 is required for full induction of TOX4-dependent activity and the interaction is increased by cAMP and inhibited by insulin. Post-translationally, sumoylated with SUMO1. Sumoylation on Lys-288, but not on Lys-269, is required for nuclear localization of this protein. Sumoylation is enhanced under hypoxia, promoting nuclear localization and stabilization. Stimulated by phosphorylation. Phosphorylation of both Ser-117 and Ser-126 in the SCN regulates the activity of CREB and participates in circadian rhythm generation. Phosphorylation of Ser-117 allows CREBBP binding. Phosphorylated upon calcium influx by CaMK4 and CaMK2 on Ser-117. CaMK4 is much more potent than CaMK2 in activating CREB. Phosphorylated by CaMK2 on Ser-126. Phosphorylation of Ser-126 blocks CREB-mediated transcription even when Ser-117 is phosphorylated. Phosphorylated by CaMK1. Phosphorylation of Ser-255 by HIPK2 in response to genotoxic stress promotes CREB1 activity, facilitating the recruitment of the coactivator CBP. Phosphorylated at Ser-117 by RPS6KA3, RPS6KA4 and RPS6KA5 in response to mitogenic or stress stimuli. CREBL2 positively regulates phosphorylation at Ser-117 thereby stimulating CREB1 transcriptional activity. In liver, phosphorylation is induced by fasting or glucagon in a circadian fashion. Phosphorylated by TSSK4 on Ser-117.

It localises to the nucleus. Its function is as follows. Phosphorylation-dependent transcription factor that stimulates transcription upon binding to the DNA cAMP response element (CRE), a sequence present in many viral and cellular promoters. Transcription activation is enhanced by the TORC coactivators which act independently of Ser-117 phosphorylation. Involved in different cellular processes including the synchronization of circadian rhythmicity and the differentiation of adipose cells. Regulates the expression of apoptotic and inflammatory response factors in cardiomyocytes in response to ERFE-mediated activation of AKT signaling. In Bos taurus (Bovine), this protein is Cyclic AMP-responsive element-binding protein 1 (CREB1).